Reading from the N-terminus, the 305-residue chain is MAKPDLSVEISGIKLRNPVMTASGTFGYGKEFSDYLDLEKIGAIITKGLSLRPKAGNPTPRIVETPGGMLNAIGLQNVGIDAFIGEKLPFLRTVDTPVIVNLYGNTLEEYGELAEKLDRLPEVAGLEVNISCPNVKQGGIVFGTDPNAAAEVVGLVRRSTSKPLIIKLSPNVTDVVRMADACVNAGADALSLINTLTGMAIDLQKRRPILANITGGLSGPAIKPVALRMVWQVSQAMAVPIIGIGGIMSATDALEFMLAGATAVQVGTANFLDPSAAQTIAAGIEDYLAKNGISDVKELIGALKI.

Residues S23 and 47-48 each bind FMN; that span reads KG. Substrate is bound by residues K47 and 71-75; that span reads NAIGL. Residues N101 and N129 each contribute to the FMN site. Substrate is bound at residue N129. The active-site Nucleophile is C132. FMN is bound by residues K167 and I193. Substrate is bound at residue 194–195; that stretch reads NT. Residues G219, 245–246, and 267–268 contribute to the FMN site; these read GG and GT.

This sequence belongs to the dihydroorotate dehydrogenase family. Type 1 subfamily. As to quaternary structure, heterotetramer of 2 PyrK and 2 PyrD type B subunits. The cofactor is FMN.

It localises to the cytoplasm. It catalyses the reaction (S)-dihydroorotate + NAD(+) = orotate + NADH + H(+). The protein operates within pyrimidine metabolism; UMP biosynthesis via de novo pathway; orotate from (S)-dihydroorotate (NAD(+) route): step 1/1. Its function is as follows. Catalyzes the conversion of dihydroorotate to orotate with NAD(+) as electron acceptor. The sequence is that of Dihydroorotate dehydrogenase B (NAD(+)), catalytic subunit (pyrD) from Geotalea daltonii (strain DSM 22248 / JCM 15807 / FRC-32) (Geobacter daltonii).